Reading from the N-terminus, the 259-residue chain is Glucosamine-6-phosphate deaminase (259 aa).

Asp66 acts as the Proton acceptor; for enolization step in catalysis. The active-site For ring-opening step is Asp135. His137 serves as the catalytic Proton acceptor; for ring-opening step. Catalysis depends on Glu142, which acts as the For ring-opening step.

The protein belongs to the glucosamine/galactosamine-6-phosphate isomerase family. NagB subfamily.

The catalysed reaction is alpha-D-glucosamine 6-phosphate + H2O = beta-D-fructose 6-phosphate + NH4(+). It functions in the pathway amino-sugar metabolism; N-acetylneuraminate degradation; D-fructose 6-phosphate from N-acetylneuraminate: step 5/5. Its function is as follows. Catalyzes the reversible isomerization-deamination of glucosamine 6-phosphate (GlcN6P) to form fructose 6-phosphate (Fru6P) and ammonium ion. The sequence is that of Glucosamine-6-phosphate deaminase from Rhodococcus jostii (strain RHA1).